The sequence spans 1416 residues: DNA-directed RNA polymerase subunit beta' (1416 aa).

The Zn(2+) site is built by cysteine 68, cysteine 70, cysteine 83, and cysteine 86. Mg(2+)-binding residues include aspartate 458, aspartate 460, and aspartate 462. Cysteine 811, cysteine 884, cysteine 891, and cysteine 894 together coordinate Zn(2+).

It belongs to the RNA polymerase beta' chain family. As to quaternary structure, the RNAP catalytic core consists of 2 alpha, 1 beta, 1 beta' and 1 omega subunit. When a sigma factor is associated with the core the holoenzyme is formed, which can initiate transcription. Mg(2+) serves as cofactor. The cofactor is Zn(2+).

It carries out the reaction RNA(n) + a ribonucleoside 5'-triphosphate = RNA(n+1) + diphosphate. Its function is as follows. DNA-dependent RNA polymerase catalyzes the transcription of DNA into RNA using the four ribonucleoside triphosphates as substrates. This chain is DNA-directed RNA polymerase subunit beta', found in Francisella philomiragia subsp. philomiragia (strain ATCC 25017 / CCUG 19701 / FSC 153 / O#319-036).